Reading from the N-terminus, the 796-residue chain is Protein translocase subunit SecA 2 (796 aa).

ATP is bound by residues Gln84, 102 to 106 (GEGKT), and Asp496.

The protein belongs to the SecA family. As to quaternary structure, monomer and homodimer. Part of the essential Sec protein translocation apparatus which comprises SecA, SecYEG and auxiliary proteins SecDF. Other proteins may also be involved.

The protein resides in the cell membrane. It localises to the cytoplasm. It catalyses the reaction ATP + H2O + cellular proteinSide 1 = ADP + phosphate + cellular proteinSide 2.. Its function is as follows. Part of the Sec protein translocase complex. Interacts with the SecYEG preprotein conducting channel. Has a central role in coupling the hydrolysis of ATP to the transfer of proteins into and across the cell membrane, serving as an ATP-driven molecular motor driving the stepwise translocation of polypeptide chains across the membrane. The protein is Protein translocase subunit SecA 2 of Staphylococcus epidermidis (strain ATCC 12228 / FDA PCI 1200).